The chain runs to 299 residues: MVDKKLVVVFGGTGAQGGSVARTLLEDGTFKVRVVTRNPRKKAAKELRLQGAEVVQGDQDDQVIMELALNGAYATFIVTNYWESCSQEQEVKQGKLLADLARRLGLHYVVYSGLENIKKLTAGRLAAAHFDGKGEVEEYFRDIGVPMTSVRLPCYFENLLSHFLPQKAPDGKSYLLSLPTGDVPMDGMSVSDLGPVVLSLLKMPEKYVGQNIGLSTCRHTAEEYAALLTKHTRKVVHDAKMTPEDYEKLGFPGARDLANMFRFYALRPDRDIELTLRLNPKALTLDQWLEQHKGDFNLL.

NADP(+) is bound by residues Gly-11 to Gln-16, Arg-37 to Lys-41, Asp-58 to Gln-59, Gln-62, Thr-79 to Tyr-81, Lys-92, Lys-133, and Tyr-155 to Asn-158. An interaction with ASS1 region spans residues Pro-153 to Ser-189.

It belongs to the NmrA-type oxidoreductase family. In terms of assembly, homodimer. Interacts with ASS1. Interaction is enhanced by low NADPH/NADP(+) ratios, which results in inhibition of ASS1 activity.

It is found in the cytoplasm. The protein localises to the perinuclear region. It localises to the nucleus. Its function is as follows. Redox sensor protein. Undergoes restructuring and subcellular redistribution in response to changes in intracellular NADPH/NADP(+) levels. At low NADPH concentrations the protein is found mainly as a monomer, and binds argininosuccinate synthase (ASS1), the enzyme involved in nitric oxide synthesis. Association with ASS1 impairs its activity and reduces the production of nitric oxide, which subsecuently prevents apoptosis. Under normal NADPH concentrations, the protein is found as a dimer and hides the binding site for ASS1. The homodimer binds one molecule of NADPH. Has higher affinity for NADPH than for NADP(+). Binding to NADPH is necessary to form a stable dimer. This is NmrA-like family domain-containing protein 1 (NMRAL1) from Homo sapiens (Human).